The chain runs to 72 residues: U1-sicaritoxin-Sdo1a (72 aa).

A signal peptide spans methionine 1 to alanine 24. A propeptide spanning residues glutamate 25–methionine 41 is cleaved from the precursor. Disulfide bonds link cysteine 43-cysteine 61, cysteine 50-cysteine 64, and cysteine 60-cysteine 69.

In terms of tissue distribution, expressed by the venom gland.

The protein localises to the secreted. This is U1-sicaritoxin-Sdo1a from Hexophthalma dolichocephala (Afrotropical spider).